Here is a 57-residue protein sequence, read N- to C-terminus: MCRLYAIILIVLVMNVIMTIIPDSKVEVVSCEDCPEHCSTQKARAKCDNDKCVCEPI.

The first 19 residues, 1–19, serve as a signal peptide directing secretion; that stretch reads MCRLYAIILIVLVMNVIMT. A propeptide spanning residues 20–28 is cleaved from the precursor; that stretch reads IIPDSKVEV. 3 cysteine pairs are disulfide-bonded: Cys-31-Cys-47, Cys-34-Cys-52, and Cys-38-Cys-54.

This sequence belongs to the short scorpion toxin superfamily. Potassium channel inhibitor family. Alpha-KTx 08 subfamily. Contains 3 disulfide bonds. In terms of tissue distribution, expressed by the venom gland.

The protein localises to the secreted. Its function is as follows. Selectively inhibits voltage-gated potassium channels rKv1.2/KCNA2 (IC(50)=331 nM) and hKv1.3/KCNA3 (IC(50)=503 nM). Partially inihibts rKv1.6/KCNA6 (IC(50)=9983 nM). In Orthochirus scrobiculosus (Central Asian scorpion), this protein is Potassium channel toxin alpha-KTx 8.8.